A 207-amino-acid polypeptide reads, in one-letter code: ATP-dependent Clp protease proteolytic subunit (207 aa).

Ser111 functions as the Nucleophile in the catalytic mechanism. Residue His136 is part of the active site.

Belongs to the peptidase S14 family. As to quaternary structure, fourteen ClpP subunits assemble into 2 heptameric rings which stack back to back to give a disk-like structure with a central cavity, resembling the structure of eukaryotic proteasomes. Component of the ClpAP and ClpXP complexes.

Its subcellular location is the cytoplasm. The enzyme catalyses Hydrolysis of proteins to small peptides in the presence of ATP and magnesium. alpha-casein is the usual test substrate. In the absence of ATP, only oligopeptides shorter than five residues are hydrolyzed (such as succinyl-Leu-Tyr-|-NHMec, and Leu-Tyr-Leu-|-Tyr-Trp, in which cleavage of the -Tyr-|-Leu- and -Tyr-|-Trp bonds also occurs).. In terms of biological role, cleaves peptides in various proteins in a process that requires ATP hydrolysis. Has a chymotrypsin-like activity. Plays a major role in the degradation of misfolded proteins. The protein is ATP-dependent Clp protease proteolytic subunit of Salmonella enteritidis PT4 (strain P125109).